A 159-amino-acid polypeptide reads, in one-letter code: Globin CTT-W (159 aa).

Residues 1-16 (MKFLVILTLCIAGAIA) form the signal peptide. One can recognise a Globin domain in the interval 17–159 (HCDKAPFIKA…HHAIVYSILE (143 aa)). The heme b site is built by H73 and H108.

This sequence belongs to the globin family.

This is Globin CTT-W (CTT-W) from Chironomus thummi piger (Midge).